Consider the following 297-residue polypeptide: Ketohexokinase (297 aa).

Residues aspartate 15, glycine 41, asparagine 42, and asparagine 45 each contribute to the beta-D-fructose site. ATP contacts are provided by residues arginine 107, 225–228 (AEEG), and 254–257 (GAGD). Aspartate 257 contacts beta-D-fructose.

It belongs to the carbohydrate kinase PfkB family. Homodimer.

It carries out the reaction beta-D-fructose + ATP = beta-D-fructose 1-phosphate + ADP + H(+). It participates in carbohydrate metabolism; fructose metabolism. Its activity is regulated as follows. Requires potassium. Inhibition by ADP. In terms of biological role, catalyzes the phosphorylation of the ketose sugar fructose to fructose-1-phosphate. This is Ketohexokinase (KHK) from Pongo abelii (Sumatran orangutan).